A 309-amino-acid polypeptide reads, in one-letter code: Protein FdhE homolog (309 aa).

Positions 1–22 (MSIRIVPQEQLEQNGKSTPEGH) are disordered.

It belongs to the FdhE family.

It localises to the cytoplasm. In terms of biological role, necessary for formate dehydrogenase activity. The polypeptide is Protein FdhE homolog (Pectobacterium carotovorum subsp. carotovorum (strain PC1)).